Consider the following 416-residue polypeptide: Gamma-glutamyl phosphate reductase (416 aa).

The protein belongs to the gamma-glutamyl phosphate reductase family.

Its subcellular location is the cytoplasm. The catalysed reaction is L-glutamate 5-semialdehyde + phosphate + NADP(+) = L-glutamyl 5-phosphate + NADPH + H(+). It participates in amino-acid biosynthesis; L-proline biosynthesis; L-glutamate 5-semialdehyde from L-glutamate: step 2/2. Its function is as follows. Catalyzes the NADPH-dependent reduction of L-glutamate 5-phosphate into L-glutamate 5-semialdehyde and phosphate. The product spontaneously undergoes cyclization to form 1-pyrroline-5-carboxylate. The sequence is that of Gamma-glutamyl phosphate reductase from Streptococcus thermophilus (strain ATCC BAA-491 / LMD-9).